The following is a 704-amino-acid chain: Boron transporter 1 (704 aa).

Topologically, residues 1–35 (MEETFVPFEGIKNDLKGRLMCYKQDWTGGFKAGFR) are cytoplasmic. Residues 36–56 (ILAPTTYIFFASAIPVISFGE) traverse the membrane as a helical segment. Residues 57–75 (QLERSTDGVLTAVQTLAST) are Extracellular-facing. The helical transmembrane segment at 76-96 (AICGMIHSIIGGQPLLILGVA) threads the bilayer. At 97–120 (EPTVIMYTFMFNFAKARPELGRDL) the chain is on the cytoplasmic side. A helical membrane pass occupies residues 121 to 141 (FLAWSGWVCVWTALMLFVLAI). Over 142 to 155 (CGACSIINRFTRVA) the chain is Extracellular. Residues 156-176 (GELFGLLIAMLFMQQAIKGLV) form a helical membrane-spanning segment. The Cytoplasmic segment spans residues 177–195 (DEFRIPERENQKLKEFLPS). Residues 196–216 (WRFANGMFALVLSFGLLLTGL) traverse the membrane as a helical segment. The Extracellular segment spans residues 217 to 233 (RSRKARSWRYGTGWLRS). Residues 234–254 (LIADYGVPLMVLVWTGVSYIP) traverse the membrane as a helical segment. At 255 to 289 (AGDVPKGIPRRLFSPNPWSPGAYGNWTVVKEMLDV) the chain is on the cytoplasmic side. The chain crosses the membrane as a helical span at residues 290–310 (PIVYIIGAFIPASMIAVLYYF). Residues 311-337 (DHSVASQLAQQKEFNLRKPSSYHYDLL) lie on the Extracellular side of the membrane. Residues 338-358 (LLGFLTLMCGLLGVPPSNGVI) traverse the membrane as a helical segment. Over 359–480 (PQSPMHTKSL…STMVGGCVAA (122 aa)) the chain is Cytoplasmic. A helical transmembrane segment spans residues 481–501 (MPILKMIPTSVLWGYFAFMAI). Topologically, residues 502–557 (ESLPGNQFWERILLLFTAPSRRFKVLEDYHATFVETVPFKTIAMFTLFQTTYLLIC) are extracellular. Residues 558–578 (FGLTWIPIAGVMFPLMIMFLI) form a helical membrane-spanning segment. At 579-704 (PVRQYLLPRF…RSPLNQSSSN (126 aa)) the chain is on the cytoplasmic side. The disordered stretch occupies residues 641-704 (EFRHTSSPKV…RSPLNQSSSN (64 aa)). The span at 647-664 (SPKVTSSSSTPVNNRSLS) shows a compositional bias: low complexity.

This sequence belongs to the anion exchanger (TC 2.A.31.3) family. Expressed in proximal side of various root cells, notably in the columella, lateral root cap, epidermis and endodermis in tip and elongation zones of the root. Also detected in the epidermis, cortex, endodermis, and stele cells of the root hair zone. Observed in cotyledons and hypocotyls.

The protein localises to the cell membrane. Its subcellular location is the endosome membrane. It localises to the vacuole membrane. Functionally, efflux-type boron (B) transporter for xylem loading, responsive of boron translocation from roots to shoots under boron limitation. Boron is essential for maintaining the integrity of plants cell walls. The protein is Boron transporter 1 of Arabidopsis thaliana (Mouse-ear cress).